The following is a 193-amino-acid chain: MIGRIAGILLEKNPPHLLVDCNGVGYEIDVPMSTFYNLPQTGERVVLLTQQIVREDAHLLYGFLTQQERTTFRELLKITGIGARMALAVLSGMSVQELAQAVTMQDAARLTRLPGIGKKTAERLLLELKGKLGADLGALAGAASPSDHATDILNALLALGYSEKEGLAAIKNVPAGTGVSEGIKLALKALSKA.

Residues 1 to 64 (MIGRIAGILL…EDAHLLYGFL (64 aa)) are domain I. Residues 65 to 139 (TQQERTTFRE…GKLGADLGAL (75 aa)) form a domain II region. The tract at residues 139-143 (LAGAA) is flexible linker. Residues 144–193 (SPSDHATDILNALLALGYSEKEGLAAIKNVPAGTGVSEGIKLALKALSKA) form a domain III region.

The protein belongs to the RuvA family. Homotetramer. Forms an RuvA(8)-RuvB(12)-Holliday junction (HJ) complex. HJ DNA is sandwiched between 2 RuvA tetramers; dsDNA enters through RuvA and exits via RuvB. An RuvB hexamer assembles on each DNA strand where it exits the tetramer. Each RuvB hexamer is contacted by two RuvA subunits (via domain III) on 2 adjacent RuvB subunits; this complex drives branch migration. In the full resolvosome a probable DNA-RuvA(4)-RuvB(12)-RuvC(2) complex forms which resolves the HJ.

Its subcellular location is the cytoplasm. The RuvA-RuvB-RuvC complex processes Holliday junction (HJ) DNA during genetic recombination and DNA repair, while the RuvA-RuvB complex plays an important role in the rescue of blocked DNA replication forks via replication fork reversal (RFR). RuvA specifically binds to HJ cruciform DNA, conferring on it an open structure. The RuvB hexamer acts as an ATP-dependent pump, pulling dsDNA into and through the RuvAB complex. HJ branch migration allows RuvC to scan DNA until it finds its consensus sequence, where it cleaves and resolves the cruciform DNA. The polypeptide is Holliday junction branch migration complex subunit RuvA (Burkholderia cenocepacia (strain ATCC BAA-245 / DSM 16553 / LMG 16656 / NCTC 13227 / J2315 / CF5610) (Burkholderia cepacia (strain J2315))).